The following is a 1663-amino-acid chain: Cortactin-binding protein 2 (1663 aa).

Disordered stretches follow at residues 1–23, 203–222, 367–440, 454–478, and 498–616; these read MATD…AGAA, KKKT…RSTE, GASV…LHPG, GNAN…SPTS, and RFTS…PKPS. The stretch at 119–276 forms a coiled coil; it reads KKMQERMSAQ…EQLKRGSDSK (158 aa). Residues 386 to 396 show a composition bias toward low complexity; sequence PSTGSTPDPTS. The residue at position 498 (R498) is an Asymmetric dimethylarginine. A compositionally biased stretch (polar residues) spans 583-593; sequence TVASTPSSLPQ. ANK repeat units follow at residues 709 to 739, 743 to 772, 776 to 805, 809 to 838, 842 to 871, and 912 to 942; these read GRPT…DINY, DGHS…QVNA, NGFT…NINH, GGQT…NRSV, DGWT…PAHG, and EGWT…EPER. Residues 1449–1482 are disordered; sequence KGESGAWRKVNTSPRRKSGRFSLPTWNKPDLSTE. S1524 is modified (phosphoserine). The tract at residues 1581–1663 is disordered; it reads QKEVSPLSSH…KNEHLEKPNK (83 aa). Polar residues predominate over residues 1582–1599; sequence KEVSPLSSHQTTECSNSK. Positions 1624-1638 are enriched in low complexity; it reads SQNTKRSSSSSNTRQ. Over residues 1639–1648 the composition is skewed to polar residues; the sequence is IEINNNSKEV. Over residues 1653-1663 the composition is skewed to basic and acidic residues; it reads HKNEHLEKPNK.

In terms of assembly, interacts with CTTN/cortactin SH3 domain. Interacts with STRN, STRN4/zinedin and MOB4/phocein; this interactions mediate the association with the STRIPAK core complex and may regulate dendritic spine distribution of the STRIPAK complex in hippocampal neurons. Activation of glutamate receptors weakens the interaction with STRN and STRN4. As to expression, highest expression in brain. Also expressed in kidney, pancreas, lung, heart, liver, skeletal muscle and placenta.

The protein resides in the cytoplasm. The protein localises to the cell cortex. It is found in the cell projection. It localises to the dendritic spine. In terms of biological role, regulates the dendritic spine distribution of CTTN/cortactin in hippocampal neurons, and thus controls dendritic spinogenesis and dendritic spine maintenance. Associates with the striatin-interacting phosphatase and kinase (STRIPAK) core complex to regulate dendritic spine distribution of the STRIPAK complex in hippocampal neurons. This is Cortactin-binding protein 2 from Homo sapiens (Human).